A 94-amino-acid chain; its full sequence is Large ribosomal subunit protein bL25 (94 aa).

This sequence belongs to the bacterial ribosomal protein bL25 family. In terms of assembly, part of the 50S ribosomal subunit; part of the 5S rRNA/L5/L18/L25 subcomplex. Contacts the 5S rRNA. Binds to the 5S rRNA independently of L5 and L18.

This is one of the proteins that binds to the 5S RNA in the ribosome where it forms part of the central protuberance. The sequence is that of Large ribosomal subunit protein bL25 from Escherichia coli O6:K15:H31 (strain 536 / UPEC).